A 25-amino-acid polypeptide reads, in one-letter code: LKPDEELQGPGGVLSRGYFVFRPRN.

At N25 the chain carries Asparagine amide.

Belongs to the NmU family.

It localises to the secreted. Functionally, stimulates uterine smooth muscle contraction and causes selective vasoconstriction. This chain is Neuromedin-U-25, found in Rana temporaria (European common frog).